The primary structure comprises 211 residues: Imidazole glycerol phosphate synthase subunit HisH (211 aa).

One can recognise a Glutamine amidotransferase type-1 domain in the interval 3 to 211 (VIAVIDYDMG…VSQIKAPVLV (209 aa)). Residue Cys81 is the Nucleophile of the active site. Residues His186 and Glu188 contribute to the active site.

As to quaternary structure, heterodimer of HisH and HisF.

It localises to the cytoplasm. The catalysed reaction is 5-[(5-phospho-1-deoxy-D-ribulos-1-ylimino)methylamino]-1-(5-phospho-beta-D-ribosyl)imidazole-4-carboxamide + L-glutamine = D-erythro-1-(imidazol-4-yl)glycerol 3-phosphate + 5-amino-1-(5-phospho-beta-D-ribosyl)imidazole-4-carboxamide + L-glutamate + H(+). The enzyme catalyses L-glutamine + H2O = L-glutamate + NH4(+). The protein operates within amino-acid biosynthesis; L-histidine biosynthesis; L-histidine from 5-phospho-alpha-D-ribose 1-diphosphate: step 5/9. Its function is as follows. IGPS catalyzes the conversion of PRFAR and glutamine to IGP, AICAR and glutamate. The HisH subunit catalyzes the hydrolysis of glutamine to glutamate and ammonia as part of the synthesis of IGP and AICAR. The resulting ammonia molecule is channeled to the active site of HisF. This is Imidazole glycerol phosphate synthase subunit HisH from Cyanothece sp. (strain PCC 7425 / ATCC 29141).